We begin with the raw amino-acid sequence, 206 residues long: Cytochrome c biogenesis ATP-binding export protein CcmA (206 aa).

Residues 4–205 form the ABC transporter domain; the sequence is LEGIDLTCIR…AGAAIQRLQL (202 aa). 36-43 provides a ligand contact to ATP; sequence GPNGSGKT.

This sequence belongs to the ABC transporter superfamily. CcmA exporter (TC 3.A.1.107) family. As to quaternary structure, the complex is composed of two ATP-binding proteins (CcmA) and two transmembrane proteins (CcmB).

It is found in the cell inner membrane. It carries out the reaction heme b(in) + ATP + H2O = heme b(out) + ADP + phosphate + H(+). In terms of biological role, part of the ABC transporter complex CcmAB involved in the biogenesis of c-type cytochromes; once thought to export heme, this seems not to be the case, but its exact role is uncertain. Responsible for energy coupling to the transport system. The polypeptide is Cytochrome c biogenesis ATP-binding export protein CcmA (Nitrosospira multiformis (strain ATCC 25196 / NCIMB 11849 / C 71)).